Reading from the N-terminus, the 168-residue chain is Crossover junction endodeoxyribonuclease RuvC (168 aa).

Active-site residues include Asp9, Glu70, and Asp145. The Mg(2+) site is built by Asp9, Glu70, and Asp145.

This sequence belongs to the RuvC family. In terms of assembly, homodimer which binds Holliday junction (HJ) DNA. The HJ becomes 2-fold symmetrical on binding to RuvC with unstacked arms; it has a different conformation from HJ DNA in complex with RuvA. In the full resolvosome a probable DNA-RuvA(4)-RuvB(12)-RuvC(2) complex forms which resolves the HJ. The cofactor is Mg(2+).

It is found in the cytoplasm. It carries out the reaction Endonucleolytic cleavage at a junction such as a reciprocal single-stranded crossover between two homologous DNA duplexes (Holliday junction).. Its function is as follows. The RuvA-RuvB-RuvC complex processes Holliday junction (HJ) DNA during genetic recombination and DNA repair. Endonuclease that resolves HJ intermediates. Cleaves cruciform DNA by making single-stranded nicks across the HJ at symmetrical positions within the homologous arms, yielding a 5'-phosphate and a 3'-hydroxyl group; requires a central core of homology in the junction. The consensus cleavage sequence is 5'-(A/T)TT(C/G)-3'. Cleavage occurs on the 3'-side of the TT dinucleotide at the point of strand exchange. HJ branch migration catalyzed by RuvA-RuvB allows RuvC to scan DNA until it finds its consensus sequence, where it cleaves and resolves the cruciform DNA. This Chlamydia felis (strain Fe/C-56) (Chlamydophila felis) protein is Crossover junction endodeoxyribonuclease RuvC.